Reading from the N-terminus, the 184-residue chain is Probable chemoreceptor glutamine deamidase CheD (184 aa).

Belongs to the CheD family.

The catalysed reaction is L-glutaminyl-[protein] + H2O = L-glutamyl-[protein] + NH4(+). Probably deamidates glutamine residues to glutamate on methyl-accepting chemotaxis receptors (MCPs), playing an important role in chemotaxis. The chain is Probable chemoreceptor glutamine deamidase CheD from Rhizobium rhizogenes (strain K84 / ATCC BAA-868) (Agrobacterium radiobacter).